Reading from the N-terminus, the 242-residue chain is uncharacterized protein (242 aa).

A compositionally biased stretch (basic and acidic residues) spans 1–12 (MKLRRERFERRN). The segment at 1 to 21 (MKLRRERFERRNGSGKNSQSS) is disordered. Residues 1-23 (MKLRRERFERRNGSGKNSQSSSS) lie on the Cytoplasmic side of the membrane. Residues 24-44 (WMVTFTDLITLILVFFILLFS) form a helical membrane-spanning segment. At 45–242 (MSQIDLQKFK…VIKKSKTTSS (198 aa)) the chain is on the extracellular side. The segment at 64 to 91 (GNGLQPDQTSIEKKNTSPSDTKKQEDQQ) is disordered. Positions 73–89 (SIEKKNTSPSDTKKQED) are enriched in basic and acidic residues. Positions 117-238 (ERGVVLVLQE…RVEIVIKKSK (122 aa)) constitute an OmpA-like domain.

The protein belongs to the MotB family.

The protein localises to the cell membrane. Functionally, may be involved in some transport function. This is an uncharacterized protein from Bacillus subtilis (strain 168).